A 507-amino-acid chain; its full sequence is Carboxypeptidase sxa2 (507 aa).

Positions 1–22 (MLSLFLKSLFAIIIIELTIIHA) are cleaved as a signal peptide. N-linked (GlcNAc...) asparagine glycans are attached at residues asparagine 38 and asparagine 45. The tract at residues 41 to 64 (SASSNQTVQPRQHAAPSSDRIKSL) is disordered. Serine 200 is an active-site residue. 3 N-linked (GlcNAc...) asparagine glycosylation sites follow: asparagine 259, asparagine 260, and asparagine 300. The active site involves aspartate 434. N-linked (GlcNAc...) asparagine glycosylation occurs at asparagine 448. The active site involves histidine 487.

This sequence belongs to the peptidase S10 family.

The protein localises to the secreted. Involved in degradation or processing of the mating pheromones. Its loss causes a persistent response to the pheromones. It may be required for stabilization of enzymes that are essential for zygote formation. May degrade the mating pheromone P-factor. The chain is Carboxypeptidase sxa2 (sxa2) from Schizosaccharomyces pombe (strain 972 / ATCC 24843) (Fission yeast).